Consider the following 548-residue polypeptide: ATP synthase subunit alpha (548 aa).

ATP is bound at residue 172–179 (GDRKTGKT). Residues 510 to 548 (QFTTSSGESAAPSEPEAEALAADEVGQETVKVNRPAPKK) form a disordered region. The segment covering 514 to 531 (SSGESAAPSEPEAEALAA) has biased composition (low complexity).

The protein belongs to the ATPase alpha/beta chains family. In terms of assembly, F-type ATPases have 2 components, CF(1) - the catalytic core - and CF(0) - the membrane proton channel. CF(1) has five subunits: alpha(3), beta(3), gamma(1), delta(1), epsilon(1). CF(0) has three main subunits: a(1), b(2) and c(9-12). The alpha and beta chains form an alternating ring which encloses part of the gamma chain. CF(1) is attached to CF(0) by a central stalk formed by the gamma and epsilon chains, while a peripheral stalk is formed by the delta and b chains.

Its subcellular location is the cell membrane. The catalysed reaction is ATP + H2O + 4 H(+)(in) = ADP + phosphate + 5 H(+)(out). Functionally, produces ATP from ADP in the presence of a proton gradient across the membrane. The alpha chain is a regulatory subunit. This chain is ATP synthase subunit alpha, found in Saccharopolyspora erythraea (strain ATCC 11635 / DSM 40517 / JCM 4748 / NBRC 13426 / NCIMB 8594 / NRRL 2338).